A 119-amino-acid chain; its full sequence is Ribonuclease P protein component (119 aa).

Belongs to the RnpA family. Consists of a catalytic RNA component (M1 or rnpB) and a protein subunit.

The catalysed reaction is Endonucleolytic cleavage of RNA, removing 5'-extranucleotides from tRNA precursor.. Functionally, RNaseP catalyzes the removal of the 5'-leader sequence from pre-tRNA to produce the mature 5'-terminus. It can also cleave other RNA substrates such as 4.5S RNA. The protein component plays an auxiliary but essential role in vivo by binding to the 5'-leader sequence and broadening the substrate specificity of the ribozyme. The protein is Ribonuclease P protein component of Listeria monocytogenes serotype 4b (strain CLIP80459).